A 315-amino-acid polypeptide reads, in one-letter code: Transaldolase (315 aa).

The active-site Schiff-base intermediate with substrate is lysine 125.

This sequence belongs to the transaldolase family. Type 1 subfamily. In terms of assembly, homodimer.

It localises to the cytoplasm. It carries out the reaction D-sedoheptulose 7-phosphate + D-glyceraldehyde 3-phosphate = D-erythrose 4-phosphate + beta-D-fructose 6-phosphate. The protein operates within carbohydrate degradation; pentose phosphate pathway; D-glyceraldehyde 3-phosphate and beta-D-fructose 6-phosphate from D-ribose 5-phosphate and D-xylulose 5-phosphate (non-oxidative stage): step 2/3. Its function is as follows. Transaldolase is important for the balance of metabolites in the pentose-phosphate pathway. This is Transaldolase from Polaromonas naphthalenivorans (strain CJ2).